Here is a 299-residue protein sequence, read N- to C-terminus: Putative fructokinase (299 aa).

Thr130 contacts ATP. Zn(2+) contacts are provided by His153, Cys168, His171, and Cys174. ATP contacts are provided by residues Pro182 and 230 to 234 (GVMQQ).

Belongs to the ROK (NagC/XylR) family. It depends on Mg(2+) as a cofactor.

The enzyme catalyses D-fructose + ATP = D-fructose 6-phosphate + ADP + H(+). Inhibited by zinc ions. Seems to be involved in the degradation of glucomannan. The chain is Putative fructokinase (gmuE) from Bacillus subtilis (strain 168).